The chain runs to 340 residues: HTH-type transcriptional regulator PtxS (340 aa).

In terms of domain architecture, HTH lacI-type spans 12-67 (VTISEVAQAAGVSKATVSRYIGGDRQLLADATAQRIEAVIEQLGYRPNRMASALKR). Positions 14–33 (ISEVAQAAGVSKATVSRYIG) form a DNA-binding region, H-T-H motif.

Homodimer.

2-ketogluconate acts as a molecular effector and causes dissociation of PtxS from its target promoter. Glucose negatively affects the molecular binding of PtxS and 2KGA, and gluconic acid inhibits the PtxS-2KGA binding reaction. In terms of biological role, involved in the regulation of 2-ketogluconic acid metabolism via the control of the expression of the kgu operon. Binds directly to a 14-bp palindrome sequence via its conserved HTH motif. In Pseudomonas plecoglossicida, this protein is HTH-type transcriptional regulator PtxS.